We begin with the raw amino-acid sequence, 609 residues long: Proteasome-associated ATPase (609 aa).

The interval 1-25 is disordered; the sequence is MADSERSEAFGTPDDTPLSSNDAAE. The stretch at 19-96 forms a coiled coil; that stretch reads SSNDAAELEQ…LREEVDRLGQ (78 aa). An ATP-binding site is contributed by 296 to 301; sequence GCGKTL. A docks into pockets in the proteasome alpha-ring region spans residues 608 to 609; that stretch reads YL.

It belongs to the AAA ATPase family. In terms of assembly, homohexamer. Assembles into a hexameric ring structure that caps the 20S proteasome core. Strongly interacts with the prokaryotic ubiquitin-like protein Pup through a hydrophobic interface; the interacting region of ARC lies in its N-terminal coiled-coil domain. There is one Pup binding site per ARC hexamer ring. Upon ATP-binding, the C-terminus of ARC interacts with the alpha-rings of the proteasome core, possibly by binding to the intersubunit pockets.

The protein operates within protein degradation; proteasomal Pup-dependent pathway. Functionally, ATPase which is responsible for recognizing, binding, unfolding and translocation of pupylated proteins into the bacterial 20S proteasome core particle. May be essential for opening the gate of the 20S proteasome via an interaction with its C-terminus, thereby allowing substrate entry and access to the site of proteolysis. Thus, the C-termini of the proteasomal ATPase may function like a 'key in a lock' to induce gate opening and therefore regulate proteolysis. The polypeptide is Proteasome-associated ATPase (Mycobacterium marinum (strain ATCC BAA-535 / M)).